The chain runs to 422 residues: uncharacterized protein (422 aa).

This sequence belongs to the asfivirus K421R family.

It localises to the virion. This is an uncharacterized protein from Ornithodoros (relapsing fever ticks).